A 427-amino-acid chain; its full sequence is Type II methyltransferase M1.BsuMI (427 aa).

An SAM-dependent MTase C5-type domain is found at 84–427 (INIADLFSGC…SYLLALHQLR (344 aa)). Residue C176 is part of the active site.

The protein belongs to the class I-like SAM-binding methyltransferase superfamily. C5-methyltransferase family. Monomer. May form a complex with YdiP, also seems to be active alone.

It carries out the reaction a 2'-deoxycytidine in DNA + S-adenosyl-L-methionine = a 5-methyl-2'-deoxycytidine in DNA + S-adenosyl-L-homocysteine + H(+). Somewhat inhibited by MgCl(2) and spermidine, strongly inhibited by MnCl(2). In terms of biological role, a methylase, recognizes the double-stranded sequence 5'-YTCGAR-3', methylates C-3 on both strands, and protects the DNA from cleavage by the BsuMI endonuclease. This chain is Type II methyltransferase M1.BsuMI (ydiO), found in Bacillus subtilis (strain 168).